Reading from the N-terminus, the 230-residue chain is Demethylmenaquinone methyltransferase (230 aa).

S-adenosyl-L-methionine is bound by residues Thr62, Asp80, 100 to 101 (DG), and Ser117.

This sequence belongs to the class I-like SAM-binding methyltransferase superfamily. MenG/UbiE family.

It carries out the reaction a 2-demethylmenaquinol + S-adenosyl-L-methionine = a menaquinol + S-adenosyl-L-homocysteine + H(+). It participates in quinol/quinone metabolism; menaquinone biosynthesis; menaquinol from 1,4-dihydroxy-2-naphthoate: step 2/2. Functionally, methyltransferase required for the conversion of demethylmenaquinol (DMKH2) to menaquinol (MKH2). This Corynebacterium glutamicum (strain ATCC 13032 / DSM 20300 / JCM 1318 / BCRC 11384 / CCUG 27702 / LMG 3730 / NBRC 12168 / NCIMB 10025 / NRRL B-2784 / 534) protein is Demethylmenaquinone methyltransferase.